The sequence spans 235 residues: Sugar fermentation stimulation protein homolog (235 aa).

It belongs to the SfsA family.

The protein is Sugar fermentation stimulation protein homolog of Maricaulis maris (strain MCS10) (Caulobacter maris).